The following is a 269-amino-acid chain: 3-methyl-2-oxobutanoate hydroxymethyltransferase (269 aa).

Positions 42 and 81 each coordinate Mg(2+). Residues 42 to 43 (DS), D81, and K111 each bind 3-methyl-2-oxobutanoate. Residue E113 coordinates Mg(2+). The active-site Proton acceptor is E179. Positions 250–269 (SGEFPRESHSHTEDELDDLY) are disordered. A compositionally biased stretch (basic and acidic residues) spans 252–262 (EFPRESHSHTE).

Belongs to the PanB family. As to quaternary structure, homodecamer; pentamer of dimers. The cofactor is Mg(2+).

The protein resides in the cytoplasm. The catalysed reaction is 3-methyl-2-oxobutanoate + (6R)-5,10-methylene-5,6,7,8-tetrahydrofolate + H2O = 2-dehydropantoate + (6S)-5,6,7,8-tetrahydrofolate. The protein operates within cofactor biosynthesis; coenzyme A biosynthesis. Catalyzes the reversible reaction in which hydroxymethyl group from 5,10-methylenetetrahydrofolate is transferred onto alpha-ketoisovalerate to form ketopantoate. This chain is 3-methyl-2-oxobutanoate hydroxymethyltransferase, found in Haloarcula marismortui (strain ATCC 43049 / DSM 3752 / JCM 8966 / VKM B-1809) (Halobacterium marismortui).